Here is a 345-residue protein sequence, read N- to C-terminus: Ninja-family protein AFP1 (345 aa).

2 disordered regions span residues 114-185 and 201-256; these read TSLP…ATAN and QVSG…RRLS. Basic and acidic residues-rich tracts occupy residues 123 to 132 and 222 to 232; these read EWRKRKEMQT and LETKASSDEAR. Residues 235-249 show a composition bias toward low complexity; the sequence is PSTTQPQQETTTKPT.

The protein belongs to the Ninja family. In terms of assembly, forms a heterodimer with AFP2. Interacts with ABI5/DPBF1, DPBF2, AREB3/DPBF3, ABF1, ABF3/DPBF5 and ABF4/AREB2.

The protein resides in the nucleus. Acts as a negative regulator of abscisic acid (ABA) response during germination through the ubiquitin-mediated proteolysis of ABI5/DPBF1. The chain is Ninja-family protein AFP1 (AFP1) from Arabidopsis thaliana (Mouse-ear cress).